The following is a 759-amino-acid chain: Na(+)/H(+) exchanger beta (759 aa).

The Cytoplasmic segment spans residues 1–14 (MPAFSCAFPGCRRD). A helical transmembrane segment spans residues 15–34 (LLVIVLVVFVGIGLPIEASA). At 35–75 (PAYQSHGTEGSHLTNITNTKKAFPVLAVNYEHVRKPFEIAL) the chain is on the extracellular side. N-linked (GlcNAc...) asparagine glycosylation occurs at asparagine 49. Residues 76-95 (WILLALLMKLGFHLIPRLSA) form a helical membrane-spanning segment. The Cytoplasmic portion of the chain corresponds to 96–97 (VV). A helical transmembrane segment spans residues 98 to 117 (PESCLLIVVGLLVGGLIKVI). Residues 118-122 (GEEPP) are Extracellular-facing. The helical transmembrane segment at 123–142 (VLDSQLFFLCLLPPIILDAG) threads the bilayer. The Cytoplasmic segment spans residues 143–149 (YFLPIRP). The helical transmembrane segment at 150 to 169 (FTENVGTILVFAVIGTLWNA) threads the bilayer. Topologically, residues 170-195 (FFMGGLLYALCQIESVGLSGVDLLAC) are extracellular. A helical membrane pass occupies residues 196–214 (LLFGSIVSAVDPVAVLAVF). The Cytoplasmic portion of the chain corresponds to 215-225 (EEIHINELVHI). The chain crosses the membrane as a helical span at residues 226 to 244 (LVFGESLLNDAVTVVLYNL). Residues 245 to 261 (FEEFSKVGTVTVLDVFL) are Extracellular-facing. A helical membrane pass occupies residues 262 to 282 (GVVCFFVVSLGGVLVGAIYGF). At 283–311 (LAAFTSRFTSHTRVIEPLFVFLYSYMAYL) the chain is on the cytoplasmic side. Residues 312 to 330 (SSEMFHLSGIMALIACGVV) form a helical membrane-spanning segment. Over 331–352 (MRPYVEANISHKSYTTIKYFLK) the chain is Extracellular. N-linked (GlcNAc...) asparagine glycosylation occurs at asparagine 338. The chain crosses the membrane as a helical span at residues 353–372 (MWSSVSETLIFIFLGVSTVA). Over 373-376 (GPHA) the chain is Cytoplasmic. The helical transmembrane segment at 377 to 398 (WNWTFVITTVILCLVSRVLGVI) threads the bilayer. Residues 399 to 446 (GLTFIINKFRIVKLTKKDQFIVAYGGLRGAIAFSLGYLLSNSHQMRNL) lie on the Extracellular side of the membrane. Residues 447–467 (FLTAIITVIFFTVFVQGMTIR) form a helical membrane-spanning segment. Topologically, residues 468-759 (PLVELLAVKK…KEDDDPFMSC (292 aa)) are cytoplasmic. Phosphoserine; by PKA is present on residues serine 641 and serine 648. Positions 681–759 (FPTVHFEQPS…KEDDDPFMSC (79 aa)) are disordered. Residues 707 to 719 (VPKRPSLKADIEG) show a composition bias toward basic and acidic residues.

It belongs to the monovalent cation:proton antiporter 1 (CPA1) transporter (TC 2.A.36) family. In terms of processing, activated by cAMP, protein kinase A and protein kinase C.

It localises to the basolateral cell membrane. In terms of biological role, involved in pH regulation to eliminate acids generated by active metabolism or to counter adverse environmental conditions. Major proton extruding system driven by the inward sodium ion chemical gradient. The protein is Na(+)/H(+) exchanger beta of Oncorhynchus mykiss (Rainbow trout).